A 122-amino-acid chain; its full sequence is Aspartate 1-decarboxylase (122 aa).

Serine 25 serves as the catalytic Schiff-base intermediate with substrate; via pyruvic acid. Serine 25 is subject to Pyruvic acid (Ser). Threonine 57 lines the substrate pocket. Catalysis depends on tyrosine 58, which acts as the Proton donor. Position 73–75 (73–75 (GAA)) interacts with substrate.

This sequence belongs to the PanD family. As to quaternary structure, heterooctamer of four alpha and four beta subunits. Pyruvate serves as cofactor. Post-translationally, is synthesized initially as an inactive proenzyme, which is activated by self-cleavage at a specific serine bond to produce a beta-subunit with a hydroxyl group at its C-terminus and an alpha-subunit with a pyruvoyl group at its N-terminus.

It localises to the cytoplasm. The catalysed reaction is L-aspartate + H(+) = beta-alanine + CO2. The protein operates within cofactor biosynthesis; (R)-pantothenate biosynthesis; beta-alanine from L-aspartate: step 1/1. Catalyzes the pyruvoyl-dependent decarboxylation of aspartate to produce beta-alanine. The protein is Aspartate 1-decarboxylase of Bordetella parapertussis (strain 12822 / ATCC BAA-587 / NCTC 13253).